The chain runs to 392 residues: Heat-inducible transcription repressor HrcA (392 aa).

It belongs to the HrcA family.

Its function is as follows. Negative regulator of class I heat shock genes (grpE-dnaK-dnaJ and groELS operons). Prevents heat-shock induction of these operons. The sequence is that of Heat-inducible transcription repressor HrcA from Chlamydia trachomatis serovar L2 (strain ATCC VR-902B / DSM 19102 / 434/Bu).